The primary structure comprises 249 residues: Probable septum site-determining protein MinC (249 aa).

A disordered region spans residues 115–144 (PTAVSPPPPPPPPPARAEPAPPAARPAPGR). Positions 118-139 (VSPPPPPPPPPARAEPAPPAAR) are enriched in pro residues.

This sequence belongs to the MinC family. Interacts with MinD and FtsZ.

Its function is as follows. Cell division inhibitor that blocks the formation of polar Z ring septums. Rapidly oscillates between the poles of the cell to destabilize FtsZ filaments that have formed before they mature into polar Z rings. Prevents FtsZ polymerization. This is Probable septum site-determining protein MinC from Xanthomonas axonopodis pv. citri (strain 306).